Here is a 65-residue protein sequence, read N- to C-terminus: MPKMKTKSGAKKRFRVRPGGTVKRGQAFKRHILTKKTTKNKRQLRGSVGVHDTNMVSVRAMMPNA.

A compositionally biased stretch (basic residues) spans 1–16; the sequence is MPKMKTKSGAKKRFRV. The tract at residues 1–25 is disordered; the sequence is MPKMKTKSGAKKRFRVRPGGTVKRG.

It belongs to the bacterial ribosomal protein bL35 family.

The chain is Large ribosomal subunit protein bL35 from Herminiimonas arsenicoxydans.